The primary structure comprises 286 residues: L-cysteine S-thiosulfotransferase subunit SoxA (286 aa).

A signal peptide spans 1–26 (MTVSKRFLAPVFAMVGGLVLAFSANA). One can recognise a Cytochrome c domain in the interval 80–166 (LAVERGADIW…ALTSYIKHQS (87 aa)). Heme contacts are provided by Cys-100, Cys-103, His-104, Cys-138, Cys-202, Cys-205, and His-206. Arg-243 serves as a coordination point for substrate. Residue Cys-247 coordinates heme. Cys-247 serves as the catalytic Cysteine persulfide intermediate.

It belongs to the SoxA family. In terms of assembly, heterodimer of SoxA and SoxX. The cofactor is heme. In terms of processing, cysteine persulfide at Cys-247.

It localises to the periplasm. The enzyme catalyses L-cysteinyl-[SoxY protein] + thiosulfate + 2 Fe(III)-[cytochrome c] = S-sulfosulfanyl-L-cysteinyl-[SoxY protein] + 2 Fe(II)-[cytochrome c] + 2 H(+). It carries out the reaction S-sulfanyl-L-cysteinyl-[SoxY protein] + thiosulfate + 2 Fe(III)-[cytochrome c] = S-(2-sulfodisulfanyl)-L-cysteinyl-[SoxY protein] + 2 Fe(II)-[cytochrome c] + 2 H(+). Its function is as follows. C-type diheme cytochrome, which is part of the SoxAX cytochrome complex involved in sulfur oxidation. The SoxAX complex catalyzes the formation of a heterodisulfide bond between the conserved cysteine residue on a sulfur carrier SoxYZ complex subunit SoxY and thiosulfate or other inorganic sulfur substrates. This leads to the liberation of two electrons, which may be transferred from the SoxAX complex to another cytochrome c that then channels them into the respiratory electron transport chain. Some electrons may be used for reductive CO(2) fixation. This Pseudaminobacter salicylatoxidans protein is L-cysteine S-thiosulfotransferase subunit SoxA.